Reading from the N-terminus, the 158-residue chain is SsrA-binding protein (158 aa).

Residues Lys-133–Gln-147 are compositionally biased toward basic and acidic residues. The disordered stretch occupies residues Lys-133–Glu-158.

The protein belongs to the SmpB family.

It is found in the cytoplasm. In terms of biological role, required for rescue of stalled ribosomes mediated by trans-translation. Binds to transfer-messenger RNA (tmRNA), required for stable association of tmRNA with ribosomes. tmRNA and SmpB together mimic tRNA shape, replacing the anticodon stem-loop with SmpB. tmRNA is encoded by the ssrA gene; the 2 termini fold to resemble tRNA(Ala) and it encodes a 'tag peptide', a short internal open reading frame. During trans-translation Ala-aminoacylated tmRNA acts like a tRNA, entering the A-site of stalled ribosomes, displacing the stalled mRNA. The ribosome then switches to translate the ORF on the tmRNA; the nascent peptide is terminated with the 'tag peptide' encoded by the tmRNA and targeted for degradation. The ribosome is freed to recommence translation, which seems to be the essential function of trans-translation. The chain is SsrA-binding protein from Leifsonia xyli subsp. xyli (strain CTCB07).